Here is a 660-residue protein sequence, read N- to C-terminus: Bifunctional polymyxin resistance protein ArnA (660 aa).

A formyltransferase ArnAFT region spans residues 1–304 (MKTVVFAYHD…TLGLVQGSRL (304 aa)). Residue 86-88 (HLI) coordinates (6R)-10-formyltetrahydrofolate. H104 (proton donor; for formyltransferase activity) is an active-site residue. (6R)-10-formyltetrahydrofolate is bound by residues R114 and 136–140 (VTRAD). The interval 314 to 660 (RRTRVLILGV…RTVDLTDKPS (347 aa)) is dehydrogenase ArnADH. Residues D347 and 368 to 369 (DI) each bind NAD(+). Residues A393, Y398, and 432-433 (TS) contribute to the UDP-alpha-D-glucuronate site. Catalysis depends on E434, which acts as the Proton acceptor; for decarboxylase activity. Residues R460, N492, 526-535 (KLIDGGKQKR), and Y613 each bind UDP-alpha-D-glucuronate. The active-site Proton donor; for decarboxylase activity is the R619.

In the N-terminal section; belongs to the Fmt family. UDP-L-Ara4N formyltransferase subfamily. It in the C-terminal section; belongs to the NAD(P)-dependent epimerase/dehydratase family. UDP-glucuronic acid decarboxylase subfamily. As to quaternary structure, homohexamer, formed by a dimer of trimers.

The catalysed reaction is UDP-alpha-D-glucuronate + NAD(+) = UDP-beta-L-threo-pentopyranos-4-ulose + CO2 + NADH. It carries out the reaction UDP-4-amino-4-deoxy-beta-L-arabinose + (6R)-10-formyltetrahydrofolate = UDP-4-deoxy-4-formamido-beta-L-arabinose + (6S)-5,6,7,8-tetrahydrofolate + H(+). The protein operates within nucleotide-sugar biosynthesis; UDP-4-deoxy-4-formamido-beta-L-arabinose biosynthesis; UDP-4-deoxy-4-formamido-beta-L-arabinose from UDP-alpha-D-glucuronate: step 1/3. It participates in nucleotide-sugar biosynthesis; UDP-4-deoxy-4-formamido-beta-L-arabinose biosynthesis; UDP-4-deoxy-4-formamido-beta-L-arabinose from UDP-alpha-D-glucuronate: step 3/3. It functions in the pathway bacterial outer membrane biogenesis; lipopolysaccharide biosynthesis. In terms of biological role, bifunctional enzyme that catalyzes the oxidative decarboxylation of UDP-glucuronic acid (UDP-GlcUA) to UDP-4-keto-arabinose (UDP-Ara4O) and the addition of a formyl group to UDP-4-amino-4-deoxy-L-arabinose (UDP-L-Ara4N) to form UDP-L-4-formamido-arabinose (UDP-L-Ara4FN). The modified arabinose is attached to lipid A and is required for resistance to polymyxin and cationic antimicrobial peptides. This is Bifunctional polymyxin resistance protein ArnA from Shigella dysenteriae serotype 1 (strain Sd197).